We begin with the raw amino-acid sequence, 498 residues long: Calcium uptake protein, mitochondrial (498 aa).

The transit peptide at 1 to 29 (MPALSHYRSVSSLPSVDRSFLLIQRLRIH) directs the protein to the mitochondrion. 4 consecutive EF-hand domains span residues 216 to 241 (EFFM…VTLL), 243 to 278 (IPES…MRSQ), 329 to 364 (LTEE…AADA), and 437 to 472 (LSDN…RERD). 9 residues coordinate Ca(2+): Asp222, Asp224, Asp226, Glu233, Asp256, Asp258, Asn260, Glu262, and Glu267. Ca(2+)-binding residues include Asp450, Asn452, Asp454, Asn456, and Glu461.

It belongs to the MICU1 family. MICU1 subfamily. As to expression, expressed in both green and non-green tissues, including roots, shoots, floral buds and pollen.

Its subcellular location is the mitochondrion inner membrane. The protein resides in the mitochondrion intermembrane space. Calcium-binding protein maintaining matrix calcium levels at low concentration. Regulates mitochondrial calcium dynamics in planta by restricting influx. This chain is Calcium uptake protein, mitochondrial, found in Arabidopsis thaliana (Mouse-ear cress).